The primary structure comprises 188 residues: Tuftelin (188 aa).

The stretch at 1–181 (SLRKTVQDLL…DRMEHLIEKQ (181 aa)) forms a coiled coil.

The protein belongs to the tuftelin family. Interacts with TFIP11.

Its subcellular location is the secreted. Its function is as follows. Involved in the structural organization of the epidermis. Involved in the mineralization and structural organization of enamel. The chain is Tuftelin (TUFT1) from Sus scrofa (Pig).